Here is a 1033-residue protein sequence, read N- to C-terminus: Potassium-transporting ATPase alpha chain 1 (1033 aa).

Topologically, residues 1–96 (MGKENYELYS…NALRPPRGTP (96 aa)) are cytoplasmic. Phosphotyrosine occurs at positions 6 and 9. Residues 14–39 (GTGPGGDMAAKMSKKKAGGGGGKKKE) are disordered. A compositionally biased stretch (basic residues) spans 25–38 (MSKKKAGGGGGKKK). Residue serine 26 is modified to Phosphoserine. Residues 97–117 (EYVKFARQLAGGLQCLMWVAA) traverse the membrane as a helical segment. At 118-140 (AICLIAFAIQASEGDLTTDDNLY) the chain is on the lumenal side. The chain crosses the membrane as a helical span at residues 141-161 (LALALIAVVVVTGCFGYYQEF). The Cytoplasmic segment spans residues 162–297 (KSTNIIASFK…NEKTPIAIEI (136 aa)). A helical membrane pass occupies residues 298–317 (EHFVDIIAGLAILFGATFFV). Topologically, residues 318–329 (VAMCIGYTFLRA) are lumenal. The chain crosses the membrane as a helical span at residues 330–347 (MVFFMAIVVAYVPEGLLA). 4 residues coordinate K(+): valine 338, alanine 339, valine 341, and glutamate 343. The Cytoplasmic portion of the chain corresponds to 348 to 781 (TVTVCLSLTA…EQGRLIFDNL (434 aa)). Aspartate 385 acts as the 4-aspartylphosphate intermediate in catalysis. Mg(2+)-binding residues include aspartate 385 and threonine 387. Serine 461 and serine 599 each carry phosphoserine. 2 residues coordinate Mg(2+): aspartate 726 and aspartate 730. Residues 782 to 801 (KKSIAYTLTKNIPELTPYLI) form a helical membrane-spanning segment. Glutamate 795 is a K(+) binding site. The Lumenal portion of the chain corresponds to 802–811 (YITVSVPLPL). A helical transmembrane segment spans residues 812–832 (GCITILFIELCTDIFPSVSLA). Glutamate 820 provides a ligand contact to K(+). Residues 833-852 (YEKAESDIMHLRPRNPRRDR) are Cytoplasmic-facing. Serine 838 is modified (phosphoserine). The helical transmembrane segment at 853–875 (LVNEPLAAYSYFQIGAIQSFAGF) threads the bilayer. The Lumenal portion of the chain corresponds to 876 to 927 (ADYFTAMAQEGWFPLLCVGLRPQWEDHHLQDLQDSYGQEWTFGQRLYQQYTC). The helical transmembrane segment at 928–947 (YTVFFISIEMCQIADVLIRK) threads the bilayer. Topologically, residues 948–961 (TRRLSAFQQGFFRN) are cytoplasmic. Serine 952 bears the Phosphoserine; by PKA mark. The chain crosses the membrane as a helical span at residues 962–980 (RILVIAIVFQVCIGCFLCY). Over 981 to 995 (CPGMPNIFNFMPIRF) the chain is Lumenal. A helical membrane pass occupies residues 996 to 1016 (QWWLVPMPFGLLIFVYDEIRK). Residues 1017-1033 (LGVRCCPGSWWDQELYY) are Cytoplasmic-facing.

Belongs to the cation transport ATPase (P-type) (TC 3.A.3) family. Type IIC subfamily. In terms of assembly, the gastric H(+)/K(+) ATPase pump is composed of the catalytic alpha subunit ATP4A and the regulatory beta subunit ATP4B. Interacts (via the P-domain) with ATP4B (via N-terminus); this interaction stabilizes the lumenal-open E2 conformation state and prevents the reverse reaction of the transport cycle.

It is found in the apical cell membrane. The catalysed reaction is K(+)(out) + ATP + H2O + H(+)(in) = K(+)(in) + ADP + phosphate + 2 H(+)(out). In terms of biological role, the catalytic subunit of the gastric H(+)/K(+) ATPase pump which transports H(+) ions in exchange for K(+) ions across the apical membrane of parietal cells. Uses ATP as an energy source to pump H(+) ions to the gastric lumen while transporting K(+) ion from the lumen into the cell. Remarkably generates a million-fold proton gradient across the gastric parietal cell membrane, acidifying the gastric juice down to pH 1. Within a transport cycle, the transfer of a H(+) ion across the membrane is coupled to ATP hydrolysis and is associated with a transient phosphorylation that shifts the pump conformation from inward-facing (E1) to outward-facing state (E2). The release of the H(+) ion in the stomach lumen is followed by binding of K(+) ion converting the pump conformation back to the E1 state. This is Potassium-transporting ATPase alpha chain 1 (Atp4a) from Rattus norvegicus (Rat).